A 663-amino-acid chain; its full sequence is Protein LNK2 (663 aa).

Disordered regions lie at residues 528 to 549 (HYTSDTSHSNKTSQDDQEVIPR) and 590 to 663 (MEGP…KRKL). The span at 602–629 (GTEEKGNFPKCSIRETHLTKQKAQKEEG) shows a compositional bias: basic and acidic residues. Positions 639 to 648 (APNSGSSSTV) are enriched in polar residues.

In terms of assembly, interacts with CCA1, LHY, REV4 and REV8, but not with PRR7 or PRR9. In terms of tissue distribution, expressed in roots, stems, leaves, seedlings, cotyledons, inflorescences and siliques. Highest expression in root tips, young leaves and vasculatur tissues.

The protein localises to the nucleus. In terms of biological role, transcriptional coactivator necessary for expression of the clock genes PRR5 and TOC1. Antagonizes REV8 function in the regulation of anthocyanin accumulation. Involved in red light input to the clock. Activates clock-controlled genes with afternoon peak. Mediates light inhibition of hypocotyl elongation. Unable to bind to DNA, but recruited to the evening element (EE)-containing region of the PRR5 and TOC1 promoters through its interaction with the DNA binding proteins REV8 and REV4. In Arabidopsis thaliana (Mouse-ear cress), this protein is Protein LNK2.